The sequence spans 251 residues: tRNA (guanine-N(1)-)-methyltransferase (251 aa).

S-adenosyl-L-methionine-binding positions include glycine 113 and 133-138; that span reads IGDYVL.

It belongs to the RNA methyltransferase TrmD family. As to quaternary structure, homodimer.

It is found in the cytoplasm. The enzyme catalyses guanosine(37) in tRNA + S-adenosyl-L-methionine = N(1)-methylguanosine(37) in tRNA + S-adenosyl-L-homocysteine + H(+). In terms of biological role, specifically methylates guanosine-37 in various tRNAs. This is tRNA (guanine-N(1)-)-methyltransferase from Pectobacterium carotovorum subsp. carotovorum (strain PC1).